A 254-amino-acid polypeptide reads, in one-letter code: MKRLKKIVLCISFLFLTIFIGGCGMGKEAEIKKSFEKTLSMYPIKNLEDLYDKEGYRDDQFDKKDKGTWIINSEMATQNKGEALKIKGMVLYMNRNTKTTKGYYYVNAIKNDKDGRPQENEKRYPVKMIDNKVIPTKEIKDENIKTEIKNFKFFVQYGNFKDLKNYKDGDISYNPEAPIYSAKYQLTNDDYNVKQLRERYDIPTNKAPKLLLKGSGNLKGSSVGYKNIEFTFVEEKGKNIYFSDSLDYKKSGEV.

An N-terminal signal peptide occupies residues methionine 1 to glycine 22. Cysteine 23 carries N-palmitoyl cysteine lipidation. Residue cysteine 23 is the site of S-diacylglycerol cysteine attachment.

This sequence belongs to the staphylococcal tandem lipoprotein family.

Its subcellular location is the cell membrane. This is an uncharacterized protein from Staphylococcus aureus (strain MSSA476).